We begin with the raw amino-acid sequence, 292 residues long: NAD(P)H-hydrate epimerase (292 aa).

A mitochondrion-targeting transit peptide spans 1-52 (MYGLRTLFSLGLLVGGARLGARVAQVGALGGTCPLGQGLVADGNSQCKQFRT). The 212-residue stretch at 68–279 (AQAVDEELFN…ALEKKYSLNL (212 aa)) folds into the YjeF N-terminal domain. 122–126 (NNGGD) contacts (6S)-NADPHX. The K(+) site is built by Asn123 and Asp189. (6S)-NADPHX contacts are provided by residues 193 to 199 (GFSFKGA) and Asp222. Ser225 is a K(+) binding site.

This sequence belongs to the NnrE/AIBP family. It depends on K(+) as a cofactor.

It localises to the mitochondrion. It is found in the secreted. It catalyses the reaction (6R)-NADHX = (6S)-NADHX. It carries out the reaction (6R)-NADPHX = (6S)-NADPHX. Functionally, catalyzes the epimerization of the S- and R-forms of NAD(P)HX, a damaged form of NAD(P)H that is a result of enzymatic or heat-dependent hydration. This is a prerequisite for the S-specific NAD(P)H-hydrate dehydratase to allow the repair of both epimers of NAD(P)HX. This Xenopus tropicalis (Western clawed frog) protein is NAD(P)H-hydrate epimerase.